Consider the following 661-residue polypeptide: Heme transporter BhuA (661 aa).

An N-terminal signal peptide occupies residues 1 to 23; it reads MKFTRTLVLASTFLLATVATSQA. A TBDR plug domain is found at 48-159; that stretch reads KDNIEATGGT…AAGAIRYETV (112 aa). One can recognise a TBDR beta-barrel domain in the interval 170–661; the sequence is TFGARIIGSY…TFTFQTAFKF (492 aa).

It belongs to the TonB-dependent receptor family.

The protein resides in the cell outer membrane. In terms of biological role, heme transporter. This is Heme transporter BhuA (bhuA) from Brucella suis biovar 1 (strain 1330).